The chain runs to 510 residues: MVTIRADEISKIIRERIEQYNTEIKIVNTGTVLQVGDGIARIYGLDEVMAGELVEFEEGTIGIALNLESKNVGVVLMGDGLMIQEGSSVKATGRIAQIPVSEGYLGRVINALAKPIDGRGEISSSESRLIESPAPGIISRRSVYEPLQTGLIAIDSMIPIGRGQRELIIGDRQTGKTAVATDTILNQQGQNVICVYVAVGQKASSVAQVVNTLQERGAMEYTIVVAETADSPATLQYLAPYTGAALAEFFMYRERHTLIIYDDLSKQAQAYRQMSLLLRRPPGREAYPGDVFYLHSRLLERAAKLSSQLGEGSMTALPIVETQSGDVSAYIPTNVISITDGQIFLSADLFNAGIRPAINVGISVSRVGSAAQIKAMKQVAGKLKLELAQFAELEAFAQFASDLDKATQNQLARGQRLRELLKQSQSAPLTVEEQVITIYTGTNGYLDSLEIRQVRKFLVELRAYLKTNKPQFNEIISSTKTFTGEAEALLKEAIQEQMELFLLQEQVEKN.

Residue 170-177 (GDRQTGKT) participates in ATP binding.

It belongs to the ATPase alpha/beta chains family. In terms of assembly, F-type ATPases have 2 components, CF(1) - the catalytic core - and CF(0) - the membrane proton channel. CF(1) has five subunits: alpha(3), beta(3), gamma(1), delta(1), epsilon(1). CF(0) has four main subunits: a, b, b' and c.

The protein resides in the plastid. Its subcellular location is the chloroplast thylakoid membrane. The enzyme catalyses ATP + H2O + 4 H(+)(in) = ADP + phosphate + 5 H(+)(out). Its function is as follows. Produces ATP from ADP in the presence of a proton gradient across the membrane. The alpha chain is a regulatory subunit. The sequence is that of ATP synthase subunit alpha, chloroplastic from Lotus japonicus (Lotus corniculatus var. japonicus).